A 524-amino-acid polypeptide reads, in one-letter code: Cytochrome P450 monooxygenase ankB (524 aa).

The helical transmembrane segment at phenylalanine 22–phenylalanine 42 threads the bilayer. Cysteine 466 lines the heme pocket.

It belongs to the cytochrome P450 family. Heme serves as cofactor.

The protein localises to the membrane. The enzyme catalyses cyclo(L-arginyl-tyrosyl) + reduced [NADPH--hemoprotein reductase] + O2 = cyclo(L-arginyl-L-dehydrotyrosyl) + oxidized [NADPH--hemoprotein reductase] + 2 H2O + H(+). Its pathway is alkaloid biosynthesis. Its function is as follows. Cytochrome P450 monooxygenase; part of the ank cluster that mediates the biosynthesis of NK13650 C, a highly modified cyclo-arginine-tyrosine dipeptide. AnkB is responsible for desaturation of the ankA product cyclo-Arg-Tyr diketopiperazine, likely through hydroxylation of the benzylic position followed by dehydration to yield a dehydro-cyclodipeptide. Within the pathway, the cyclodipeptide synthase ankA acts as the scaffold-generating enzyme and is responsible for formation of the cyclo-Arg-Tyr diketopiperazine (cRY) from L-Arg and L-Tyr. The ankA product cRY is desaturated by the cytochrome P450 monooxygenase ankB to yield a dehydro-cyclodipeptide intermediate. The FAD-dependent monooxygenase ankC then installs the m-OH, ankD catalyzes the attachment of L-homoserine, and ankE ligates citrate to the ankD product to yield NK13650 B. The O-methyltransferase ankF is responsible for methylation of the C-17 phenol group of NK13650 B to produce NK13650 D. Amidation of NK13650 D with L-Asp by ankG then leads to the production of NK13650 C, whereas amidation of NK13650 B produces NK13650 A. The sequence is that of Cytochrome P450 monooxygenase ankB from Aspergillus thermomutatus (Neosartorya pseudofischeri).